A 1021-amino-acid polypeptide reads, in one-letter code: 2-oxoglutarate dehydrogenase complex component E1 (1021 aa).

The N-terminal 40 residues, 1–40 (MFNLRTCASKLRPLTASQTIRSLKHNRPAAPRTFQQFRCL), are a transit peptide targeting the mitochondrion. Positions 142, 155, and 157 each coordinate Ca(2+). Thiamine diphosphate is bound by residues Arg-311, Asp-410, Asn-443, and Ile-445. Positions 410, 443, and 445 each coordinate Mg(2+). Lys-533 is covalently cross-linked (Glycyl lysine isopeptide (Lys-Gly) (interchain with G-Cter in ubiquitin)). A thiamine diphosphate-binding site is contributed by Gln-675.

The protein belongs to the alpha-ketoglutarate dehydrogenase family. Homodimer. The 2-oxoglutarate dehydrogenase complex is composed of OGDH (2-oxoglutarate dehydrogenase; E1), DLST (dihydrolipoamide succinyltransferase; E2) and DLD (dihydrolipoamide dehydrogenase; E3). It contains multiple copies of the three enzymatic components (E1, E2 and E3). In the nucleus, the 2-oxoglutarate dehydrogenase complex associates with kat2a. The cofactor is thiamine diphosphate. Requires Mg(2+) as cofactor. As to expression, expressed in the brain.

The protein resides in the mitochondrion. It is found in the nucleus. The catalysed reaction is N(6)-[(R)-lipoyl]-L-lysyl-[protein] + 2-oxoglutarate + H(+) = N(6)-[(R)-S(8)-succinyldihydrolipoyl]-L-lysyl-[protein] + CO2. Calcium ions and ADP stimulate, whereas ATP and NADH reduce catalytic activity. 2-oxoglutarate dehydrogenase (E1o) component of the 2-oxoglutarate dehydrogenase complex (OGDHC). Participates in the first step, rate limiting for the overall conversion of 2-oxoglutarate to succinyl-CoA and CO(2) catalyzed by the whole OGDHC. Catalyzes the irreversible decarboxylation of 2-oxoglutarate (alpha-ketoglutarate) via the thiamine diphosphate (ThDP) cofactor and subsequent transfer of the decarboxylated acyl intermediate on an oxidized dihydrolipoyl group that is covalently amidated to the E2 enzyme (dihydrolipoyllysine-residue succinyltransferase or DLST). Plays a key role in the Krebs (citric acid) cycle, which is a common pathway for oxidation of fuel molecules, including carbohydrates, fatty acids, and amino acids. Can catalyze the decarboxylation of 2-oxoadipate in vitro, but at a much lower rate than 2-oxoglutarate. Mainly active in the mitochondrion. A fraction of the 2-oxoglutarate dehydrogenase complex also localizes in the nucleus and is required for lysine succinylation of histones: associates with KAT2A on chromatin and provides succinyl-CoA to histone succinyltransferase KAT2A. The protein is 2-oxoglutarate dehydrogenase complex component E1 (ogdh) of Xenopus laevis (African clawed frog).